The chain runs to 764 residues: ATP-dependent DNA helicase DDM1 (764 aa).

The interval 1–42 is disordered; it reads MVSLRSRKVIPASEMVSDGKTEKDASGDSPTSVLNEEENCEE. A compositionally biased stretch (basic and acidic residues) spans 17–26; sequence SDGKTEKDAS. The stretch at 62–88 forms a coiled coil; the sequence is LISEAMAQEEEQLLKLREDEEKANNAG. Residues 129–152 are disordered; sequence IESESQKAEPEKTGRGRKRKAASQ. The span at 132–142 shows a compositional bias: basic and acidic residues; it reads ESQKAEPEKTG. The Nuclear localization signal 1 signature appears at 145 to 152; sequence RKRKAASQ. The region spanning 214-382 is the Helicase ATP-binding domain; that stretch reads ISLWQNGLNG…WSLLNFILPD (169 aa). Residue 227 to 234 coordinates ATP; that stretch reads DQMGLGKT. Residues 333–336 carry the DEAH box motif; the sequence is DEGH. The short motif at 429 to 436 is the Nuclear localization signal 2 element; it reads LRRMKCDV. Residues 528 to 695 enclose the Helicase C-terminal domain; the sequence is LLERLLVRLF…STPLEEEDIL (168 aa).

It belongs to the SNF2/RAD54 helicase family. As to quaternary structure, interacts with the MBD domains of MBD2, MBD5 and MBD6.

The protein resides in the nucleus. It carries out the reaction ATP + H2O = ADP + phosphate + H(+). ATPase activity is stimulated 3-fold by DNA (both free and nucleosomal) binding. In terms of biological role, ATP-dependent DNA helicase that plays a role in formation, organization, stability and heritability of heterochromatin and thus regulates several physiological traits. Binds to the nucleosome and promotes chromatin remodeling in an ATP-dependent manner; induces nucleosome repositioning on a short DNA fragment, and, possibly, could be guided to target sites (including silent transposable elements) by small interfering RNAs (siRNAs). Can bind both free and nucleosomal DNA. Required for the heritable maintenance of genome integrity and transcriptional gene silencing (TGS), including homology-dependent gene silencing (HDG silencing), via the maintenance of DNA methylation (mostly on cytosine, in both CpG and CpHpG sites, where H is A, T or C) and of histone methylation (e.g. chromatin methylation). May facilitate localization of MBD proteins at specific nuclear domains. Necessary for the maintenance of the genomic imprint at the MEA locus, especially for the silencing of paternally inherited MEA locus. Plays a major role in the inactivation maintenance of retrotransposons (e.g. Tar17, SINE, LINE, ATLN39, CAC1 (CACTAs), Athila elements, and mutator-like elements MULEs and TIR-MULEs) and the silencing of repeated genes and transgenes (e.g. T-DNA insertions). Required for KYP-dependent histone H3 'Lys-9' (H3K9me) methylation, deacetylation of histone H4 'Lys-16' (H4K16) and MET1-dependent DNA methylation. Involved in the chromatin organization of 5S rRNA genes (localized in the pericentromeric heterochromatin of chromosomes 3, 4, and 5) modifications during heterochromatin establishment. Prevents siRNA accumulation (siRNA are probably involved in epigenetic inheritance and in 5S rRNA genes regulation by silencing). Required during plant organogenesis and development, as well as during seed formation. The polypeptide is ATP-dependent DNA helicase DDM1 (DDM1) (Arabidopsis thaliana (Mouse-ear cress)).